A 308-amino-acid polypeptide reads, in one-letter code: Protein translocase subunit SecF (308 aa).

6 helical membrane-spanning segments follow: residues 22 to 42 (AVSY…IGIY), 140 to 160 (IEAG…YIWV), 164 to 184 (WYFG…ALGF), 194 to 214 (LSTI…SVVI), 246 to 266 (ILTV…GGEA), and 272 to 292 (VLVF…SAPI).

It belongs to the SecD/SecF family. SecF subfamily. As to quaternary structure, forms a complex with SecD. Part of the essential Sec protein translocation apparatus which comprises SecA, SecYEG and auxiliary proteins SecDF-YajC and YidC.

Its subcellular location is the cell inner membrane. In terms of biological role, part of the Sec protein translocase complex. Interacts with the SecYEG preprotein conducting channel. SecDF uses the proton motive force (PMF) to complete protein translocation after the ATP-dependent function of SecA. This chain is Protein translocase subunit SecF, found in Rickettsia akari (strain Hartford).